A 120-amino-acid chain; its full sequence is Small ribosomal subunit protein uS13 (120 aa).

A disordered region spans residues Gly-93–Lys-120. The segment covering Ala-105–Lys-120 has biased composition (basic residues).

This sequence belongs to the universal ribosomal protein uS13 family. Part of the 30S ribosomal subunit. Has been shown to cross-link to S19 forming a loose heterodimer. Forms two bridges to the 50S subunit in the 70S ribosome.

Located at the top of the head of the 30S subunit, it contacts several helices of the 16S rRNA. In the 70S ribosome it contacts the 23S rRNA (bridge B1a) and protein L5 of the 50S subunit (bridge B1b), connecting the 2 subunits; these bridges are implicated in subunit movement. Contacts the tRNA in the A and P-sites. This chain is Small ribosomal subunit protein uS13 (rpsM), found in Geobacillus stearothermophilus (Bacillus stearothermophilus).